A 70-amino-acid chain; its full sequence is Sec-independent protein translocase protein TatA (70 aa).

A helical transmembrane segment spans residues 1–21; sequence MGSFSVWHWLIVLVIVLVLFG. The segment at 42-70 is disordered; it reads GMADEDQTPPPADANANAKTVDHKADEIK. The segment covering 61-70 has biased composition (basic and acidic residues); the sequence is TVDHKADEIK.

It belongs to the TatA/E family. In terms of assembly, the Tat system comprises two distinct complexes: a TatABC complex, containing multiple copies of TatA, TatB and TatC subunits, and a separate TatA complex, containing only TatA subunits. Substrates initially bind to the TatABC complex, which probably triggers association of the separate TatA complex to form the active translocon.

It is found in the cell inner membrane. Its function is as follows. Part of the twin-arginine translocation (Tat) system that transports large folded proteins containing a characteristic twin-arginine motif in their signal peptide across membranes. TatA could form the protein-conducting channel of the Tat system. The sequence is that of Sec-independent protein translocase protein TatA from Agrobacterium fabrum (strain C58 / ATCC 33970) (Agrobacterium tumefaciens (strain C58)).